Here is a 435-residue protein sequence, read N- to C-terminus: Putative F-box/kelch-repeat protein At1g20790 (435 aa).

In terms of domain architecture, F-box spans 1–49 (MKRLPLHLLDEILFNLDPKSLGKMRCTNKSINTHISDDPNFKFEYFSRI). 2 Kelch repeats span residues 192 to 238 (PVYV…CTGD) and 280 to 335 (LYWN…LFKP).

The protein is Putative F-box/kelch-repeat protein At1g20790 of Arabidopsis thaliana (Mouse-ear cress).